Consider the following 487-residue polypeptide: Cysteine--tRNA ligase (487 aa).

Cys30 contacts Zn(2+). The 'HIGH' region signature appears at 32-42 (PTVYGHAHLGH). Residues Cys226, His251, and Glu255 each coordinate Zn(2+). The 'KMSKS' region motif lies at 283–287 (KMGKS). Lys286 lines the ATP pocket.

Belongs to the class-I aminoacyl-tRNA synthetase family. Monomer. Zn(2+) serves as cofactor.

It is found in the cytoplasm. The catalysed reaction is tRNA(Cys) + L-cysteine + ATP = L-cysteinyl-tRNA(Cys) + AMP + diphosphate. This chain is Cysteine--tRNA ligase (cysS), found in Chlorobaculum tepidum (strain ATCC 49652 / DSM 12025 / NBRC 103806 / TLS) (Chlorobium tepidum).